The sequence spans 646 residues: Acetyl-coenzyme A synthetase (646 aa).

Residues arginine 190 to lysine 193 and threonine 309 each bind CoA. Residues glycine 385–proline 387, aspartate 409–threonine 414, aspartate 498, and arginine 513 each bind ATP. Serine 521 lines the CoA pocket. ATP is bound at residue arginine 524. Mg(2+) contacts are provided by valine 535, histidine 537, and valine 540. Arginine 582 contacts CoA. At lysine 607 the chain carries N6-acetyllysine.

This sequence belongs to the ATP-dependent AMP-binding enzyme family. Mg(2+) serves as cofactor. Acetylated. Deacetylation by the SIR2-homolog deacetylase activates the enzyme.

The catalysed reaction is acetate + ATP + CoA = acetyl-CoA + AMP + diphosphate. In terms of biological role, catalyzes the conversion of acetate into acetyl-CoA (AcCoA), an essential intermediate at the junction of anabolic and catabolic pathways. AcsA undergoes a two-step reaction. In the first half reaction, AcsA combines acetate with ATP to form acetyl-adenylate (AcAMP) intermediate. In the second half reaction, it can then transfer the acetyl group from AcAMP to the sulfhydryl group of CoA, forming the product AcCoA. The protein is Acetyl-coenzyme A synthetase of Pseudoalteromonas atlantica (strain T6c / ATCC BAA-1087).